The chain runs to 212 residues: Fibrillarin-like rRNA/tRNA 2'-O-methyltransferase (212 aa).

S-adenosyl-L-methionine contacts are provided by residues 76–77 (TT), 94–95 (EL), 119–120 (DA), and 139–142 (DIAQ).

Belongs to the methyltransferase superfamily. Fibrillarin family. In terms of assembly, interacts with nop5. Component of box C/D small ribonucleoprotein (sRNP) particles that contain rpl7ae, FlpA and nop5, plus a guide RNA.

Functionally, involved in pre-rRNA and tRNA processing. Utilizes the methyl donor S-adenosyl-L-methionine to catalyze the site-specific 2'-hydroxyl methylation of ribose moieties in rRNA and tRNA. Site specificity is provided by a guide RNA that base pairs with the substrate. Methylation occurs at a characteristic distance from the sequence involved in base pairing with the guide RNA. This Picrophilus torridus (strain ATCC 700027 / DSM 9790 / JCM 10055 / NBRC 100828 / KAW 2/3) protein is Fibrillarin-like rRNA/tRNA 2'-O-methyltransferase.